The sequence spans 446 residues: Iron-sulfur cluster assembly SufBD family protein PH1385 (446 aa).

It belongs to the iron-sulfur cluster assembly SufBD family.

The polypeptide is Iron-sulfur cluster assembly SufBD family protein PH1385 (Pyrococcus horikoshii (strain ATCC 700860 / DSM 12428 / JCM 9974 / NBRC 100139 / OT-3)).